The following is a 362-amino-acid chain: Mitochondrial glycine transporter (362 aa).

Solcar repeat units lie at residues 22–108, 132–236, and 269–354; these read PDAT…MRTS, LTAM…FKND, and RSSI…LIKS. The next 6 membrane-spanning stretches (helical) occupy residues 28–53, 83–109, 138–163, 211–234, 273–299, and 329–347; these read LLAG…TRLQ, GTLP…RTSW, LTTG…TRFE, GSVA…EAFK, INST…KTRL, and GLSL…SWCI.

Belongs to the mitochondrial carrier (TC 2.A.29) family. SLC25A38 subfamily.

It localises to the mitochondrion inner membrane. It catalyses the reaction glycine(in) = glycine(out). In terms of biological role, mitochondrial glycine transporter that imports glycine into the mitochondrial matrix. Plays an important role in providing glycine for the first enzymatic step in heme biosynthesis, the condensation of glycine with succinyl-CoA to produce 5-aminolevulinate (ALA) in the mitochondrial matrix. The sequence is that of Mitochondrial glycine transporter from Candida albicans (strain SC5314 / ATCC MYA-2876) (Yeast).